The following is a 78-amino-acid chain: Teretoxin Tsu6.15 (78 aa).

The N-terminal stretch at 1-21 (MATSGRLLCFCLVLGLVFESL) is a signal peptide. The propeptide occupies 22-47 (GYSEARPPRDRKRTVTAKRYDPLAQR).

This sequence belongs to the teretoxin M (TM) superfamily. Post-translationally, contains 3 disulfide bonds. In terms of tissue distribution, expressed by the venom duct.

It localises to the secreted. The chain is Teretoxin Tsu6.15 from Terebra subulata (Chocolate spotted auger).